The following is a 666-amino-acid chain: Phosphoenolpyruvate carboxykinase (ATP) (666 aa).

Disordered regions lie at residues 1 to 68 (MATP…AHSP) and 91 to 132 (ASLT…HPAA). Residues 48 to 58 (APTTPNRSAPT) are compositionally biased toward polar residues. Over residues 109-123 (KGEAAAQGAPSTPRA) the composition is skewed to low complexity. 364-371 (GLSGTGKT) is a binding site for ATP.

This sequence belongs to the phosphoenolpyruvate carboxykinase (ATP) family.

The protein resides in the cytoplasm. The catalysed reaction is oxaloacetate + ATP = phosphoenolpyruvate + ADP + CO2. The protein operates within carbohydrate biosynthesis; gluconeogenesis. This Zea mays (Maize) protein is Phosphoenolpyruvate carboxykinase (ATP).